The chain runs to 49 residues: Large ribosomal subunit protein bL33B (49 aa).

Belongs to the bacterial ribosomal protein bL33 family.

The sequence is that of Large ribosomal subunit protein bL33B from Bacillus pumilus (strain SAFR-032).